We begin with the raw amino-acid sequence, 459 residues long: UDP-N-acetylmuramoylalanine--D-glutamate ligase (459 aa).

Residue 131–137 (GANGKST) coordinates ATP.

It belongs to the MurCDEF family.

It localises to the cytoplasm. The enzyme catalyses UDP-N-acetyl-alpha-D-muramoyl-L-alanine + D-glutamate + ATP = UDP-N-acetyl-alpha-D-muramoyl-L-alanyl-D-glutamate + ADP + phosphate + H(+). It functions in the pathway cell wall biogenesis; peptidoglycan biosynthesis. Functionally, cell wall formation. Catalyzes the addition of glutamate to the nucleotide precursor UDP-N-acetylmuramoyl-L-alanine (UMA). The protein is UDP-N-acetylmuramoylalanine--D-glutamate ligase of Methylococcus capsulatus (strain ATCC 33009 / NCIMB 11132 / Bath).